Here is a 130-residue protein sequence, read N- to C-terminus: Methylglyoxal synthase (130 aa).

Positions 1-130 (MSTPRIALIA…DLARRLPVKA (130 aa)) constitute an MGS-like domain. Residues histidine 11, lysine 15, 37 to 40 (TGTT), and 57 to 58 (SG) each bind substrate. Residue aspartate 63 is the Proton donor/acceptor of the active site. Histidine 90 is a substrate binding site.

This sequence belongs to the methylglyoxal synthase family.

It carries out the reaction dihydroxyacetone phosphate = methylglyoxal + phosphate. Its function is as follows. Catalyzes the formation of methylglyoxal from dihydroxyacetone phosphate. The chain is Methylglyoxal synthase from Burkholderia thailandensis (strain ATCC 700388 / DSM 13276 / CCUG 48851 / CIP 106301 / E264).